A 418-amino-acid polypeptide reads, in one-letter code: D-inositol 3-phosphate glycosyltransferase 1 (418 aa).

Residues 24–25 and glycine 32 each bind UDP-N-acetyl-alpha-D-glucosamine; that span reads QP. 1D-myo-inositol 3-phosphate contacts are provided by residues 29–34, lysine 87, histidine 115, serine 139, and glutamine 159; that span reads DAGGLN. Residues arginine 233 and lysine 238 each contribute to the UDP-N-acetyl-alpha-D-glucosamine site. Mg(2+) contacts are provided by tyrosine 308, arginine 309, and alanine 311. Residues glutamate 321 and glutamate 329 each contribute to the UDP-N-acetyl-alpha-D-glucosamine site. Mg(2+) is bound at residue threonine 335.

This sequence belongs to the glycosyltransferase group 1 family. MshA subfamily. In terms of assembly, homodimer.

The enzyme catalyses 1D-myo-inositol 3-phosphate + UDP-N-acetyl-alpha-D-glucosamine = 1D-myo-inositol 2-acetamido-2-deoxy-alpha-D-glucopyranoside 3-phosphate + UDP + H(+). Functionally, catalyzes the transfer of a N-acetyl-glucosamine moiety to 1D-myo-inositol 3-phosphate to produce 1D-myo-inositol 2-acetamido-2-deoxy-glucopyranoside 3-phosphate in the mycothiol biosynthesis pathway. This chain is D-inositol 3-phosphate glycosyltransferase 1, found in Catenulispora acidiphila (strain DSM 44928 / JCM 14897 / NBRC 102108 / NRRL B-24433 / ID139908).